Here is a 255-residue protein sequence, read N- to C-terminus: Acetylglutamate kinase (255 aa).

Residues 40–41 (GG), Arg-62, and Asn-153 contribute to the substrate site.

The protein belongs to the acetylglutamate kinase family. ArgB subfamily.

It localises to the cytoplasm. The enzyme catalyses N-acetyl-L-glutamate + ATP = N-acetyl-L-glutamyl 5-phosphate + ADP. The protein operates within amino-acid biosynthesis; L-arginine biosynthesis; N(2)-acetyl-L-ornithine from L-glutamate: step 2/4. In terms of biological role, catalyzes the ATP-dependent phosphorylation of N-acetyl-L-glutamate. The sequence is that of Acetylglutamate kinase from Bacillus anthracis (strain CDC 684 / NRRL 3495).